The chain runs to 333 residues: Thiamine-monophosphate kinase (333 aa).

Asp35, Thr50, and Asp51 together coordinate Mg(2+). A substrate-binding site is contributed by His58. Asp80 is a Mg(2+) binding site. ATP contacts are provided by residues Tyr111, 128–129, and Arg153; that span reads GD. Asp129 is a Mg(2+) binding site. Asp230 contributes to the Mg(2+) binding site. Ser232 contributes to the ATP binding site. Asp233 is a binding site for Mg(2+). Substrate contacts are provided by Glu278 and Phe330.

The protein belongs to the thiamine-monophosphate kinase family.

It catalyses the reaction thiamine phosphate + ATP = thiamine diphosphate + ADP. Its pathway is cofactor biosynthesis; thiamine diphosphate biosynthesis; thiamine diphosphate from thiamine phosphate: step 1/1. Catalyzes the ATP-dependent phosphorylation of thiamine-monophosphate (TMP) to form thiamine-pyrophosphate (TPP), the active form of vitamin B1. This chain is Thiamine-monophosphate kinase, found in Prochlorococcus marinus (strain SARG / CCMP1375 / SS120).